The following is a 198-amino-acid chain: Dephospho-CoA kinase (198 aa).

The 196-residue stretch at 3 to 198 (LIGLTGGIAS…VDALWAGLRG (196 aa)) folds into the DPCK domain. 11 to 16 (ASGKST) contributes to the ATP binding site.

It belongs to the CoaE family.

The protein resides in the cytoplasm. It catalyses the reaction 3'-dephospho-CoA + ATP = ADP + CoA + H(+). It participates in cofactor biosynthesis; coenzyme A biosynthesis; CoA from (R)-pantothenate: step 5/5. Catalyzes the phosphorylation of the 3'-hydroxyl group of dephosphocoenzyme A to form coenzyme A. In Leifsonia xyli subsp. xyli (strain CTCB07), this protein is Dephospho-CoA kinase.